Consider the following 223-residue polypeptide: DNA-directed RNA polymerase III subunit RPC7 (223 aa).

Residues 111-124 are compositionally biased toward basic and acidic residues; that stretch reads MMPRKKCKKGDPKS. A disordered region spans residues 111–223; it reads MMPRKKCKKG…SDDNMDEATY (113 aa). T134 carries the phosphothreonine modification. The segment covering 144 to 156 has biased composition (basic and acidic residues); the sequence is KTIEELEKRGEGE. S158 carries the post-translational modification Phosphoserine. 2 stretches are compositionally biased toward acidic residues: residues 173 to 198 and 206 to 223; these read KDDE…EEND and NGDD…EATY.

The protein belongs to the eukaryotic RPC7 RNA polymerase subunit family. Component of the RNA polymerase III complex consisting of 17 subunits: a ten-subunit horseshoe-shaped catalytic core composed of POLR3A/RPC1, POLR3B/RPC2, POLR1C/RPAC1, POLR1D/RPAC2, POLR3K/RPC10, POLR2E/RPABC1, POLR2F/RPABC2, POLR2H/RPABC3, POLR2K/RPABC4 and POLR2L/RPABC5; a mobile stalk composed of two subunits POLR3H/RPC8 and CRCP/RPC9, protruding from the core and functioning primarily in transcription initiation; and additional subunits homologous to general transcription factors of the RNA polymerase II machinery, POLR3C/RPC3-POLR3F/RPC6-POLR3G/RPC7 heterotrimer required for transcription initiation and POLR3D/RPC4-POLR3E/RPC5 heterodimer involved in both transcription initiation and termination. Directly interacts with POLR3C/RPC62. Also found in a trimeric complex with POLR3C/RPC3 and POLR3GL. As to expression, expressed at low levels in the liver.

It localises to the nucleus. Its subcellular location is the cytoplasm. DNA-dependent RNA polymerase catalyzes the transcription of DNA into RNA using the four ribonucleoside triphosphates as substrates. Specific peripheric component of RNA polymerase III (Pol III) which synthesizes small non-coding RNAs including 5S rRNA, snRNAs, tRNAs and miRNAs from at least 500 distinct genomic loci. Acts as a long tether that bridges POLR3C/RPC3-POLR3F/RPC6-POLR3G/RPC7 heterotrimer and the mobile stalk of Pol III, coordinating the dynamics of Pol III stalk and clamp modules during the transition from apo to elongation state. Pol III exists as two alternative complexes defined by the mutually exclusive incorporation of subunit POLR3G/RPC7alpha or POLR3GL/RPC7beta. POLR3G/RPC7alpha modulates Pol III transcriptome by specifically enhancing the transcription of snaR-A non-coding RNAs. At resting state, occupies the active site of apo Pol III and keeps Pol III in an autoinhibitory mode, preventing non-specific transcription. Pol III plays a key role in sensing and limiting infection by intracellular bacteria and DNA viruses. Acts as a nuclear and cytosolic DNA sensor involved in innate immune response. Can sense non-self dsDNA that serves as template for transcription into dsRNA. The non-self RNA polymerase III transcripts, such as Epstein-Barr virus-encoded RNAs (EBERs), induce type I interferon and NF-kappa-B through the RIG-I pathway. This chain is DNA-directed RNA polymerase III subunit RPC7 (Polr3g), found in Mus musculus (Mouse).